The primary structure comprises 788 residues: MSRLTEDSIGDINLASTQMQGRLEEFDEISKEEENMKKRIERLRKFKNIDTNTNHTIGLQNENLENKNKDTSITKPKRRSKRDNNRIKSLTSLMEETYNKGKSFQELKQSKLGQKDAQLSIFQYFSGHKEKIGDILKRIESIEKRKLESSDVPEIEHESRILYTKKEWTDIIKRIRLRFPELSSRTKKSLKYITNKIQIQNQSQLISEYPKNNSSIWSQASAPPDTEFTDDDLKWLYDLTSEQIINESTILQNDLEESDNETPFVMTLSQVMNTTKSEDTIDREFDVISDSSPEPSPIRVSFCCRDEQSDKALHLSEQKIQVKNSIYDPEFNGNEIFSHQKDSVETAVSIESFPFVQSGQRESITGDIAEISEDNFQVSETAPRQPQAIHGTQEAPIEISSSSINRGKTNLMSEEDRASHNEAEEVIISSPIKDSELFKTPTKRTPGSKNIMSSPFRLHCNSSPLSIRSNSVTPRHERIVSEESSAYSTARSKFKLSSAQPIPSQYQFDDSEEEAIFSSMPARQAYKKRKVYHTSRLLIDGGLYVELMNENSKVKIKTIETKRQPVDSENEIRDSEDEGEHDNSLSVIEITREVDDTDDLVNLGRNPRNENDTSVLQVPSSPQIDNSNVLGSLYTSQAADSAFGSEKILEDPIRSNALELTQDEFNNMSTKDLKAKFQEWGLKPVKGKEKMIQILSETNKLVSQSQLNDSQDKPMTASQHTIKTNIYNRISFHLKQDQYWLDKILSFEPINLCMLQEWLASGSAGVKLETDILEKYCDELGITYTDIK.

3 disordered regions span residues 59 to 86 (LQNENLENKNKDTSITKPKRRSKRDNNR), 562 to 584 (KRQPVDSENEIRDSEDEGEHDNS), and 599 to 622 (DLVNLGRNPRNENDTSVLQVPSSP). The segment covering 562-573 (KRQPVDSENEIR) has biased composition (basic and acidic residues). The segment covering 612 to 622 (DTSVLQVPSSP) has biased composition (polar residues).

Belongs to the SLX4 family. In terms of assembly, forms a heterodimer with SLX1. In terms of processing, phosphorylated in response to DNA damage.

Its subcellular location is the nucleus. Its function is as follows. Regulatory subunit of the SLX1-SLX4 structure-specific endonuclease that resolves DNA secondary structures generated during DNA repair and recombination. Has endonuclease activity towards branched DNA substrates, introducing single-strand cuts in duplex DNA close to junctions with ss-DNA. This Debaryomyces hansenii (strain ATCC 36239 / CBS 767 / BCRC 21394 / JCM 1990 / NBRC 0083 / IGC 2968) (Yeast) protein is Structure-specific endonuclease subunit SLX4.